Consider the following 227-residue polypeptide: Ribonuclease 3 (227 aa).

The RNase III domain maps to 4-133 (FEKLEKLLSY…LIAAIYLDSN (130 aa)). Glutamate 46 lines the Mg(2+) pocket. The active site involves aspartate 50. The Mg(2+) site is built by asparagine 119 and glutamate 122. Glutamate 122 is a catalytic residue. Residues 158–226 (DPKTALQEWA…ARSLLHRLKN (69 aa)) enclose the DRBM domain.

This sequence belongs to the ribonuclease III family. As to quaternary structure, homodimer. Requires Mg(2+) as cofactor.

The protein localises to the cytoplasm. The enzyme catalyses Endonucleolytic cleavage to 5'-phosphomonoester.. In terms of biological role, digests double-stranded RNA. Involved in the processing of primary rRNA transcript to yield the immediate precursors to the large and small rRNAs (23S and 16S). Processes some mRNAs, and tRNAs when they are encoded in the rRNA operon. Processes pre-crRNA and tracrRNA of type II CRISPR loci if present in the organism. The polypeptide is Ribonuclease 3 (Rickettsia africae (strain ESF-5)).